Reading from the N-terminus, the 344-residue chain is MVSVNSSHCFYNDSFKYTLYGCMFSMVFVLGLISNCVAIYIFICVLKVRNETTTYMINLAMSDLLFVFTLPFRIFYFTTRNWPFGDLLCKISVMLFYTNMYGSILFLTCISVDRFLAIVYPFKSKTLRTKRNAKIVCTGVWLTVIGGSAPAVFVQSTHSQGNNASEACFENFPEATWKTYLSRIVIFIEIVGFFIPLILNVTCSSMVLKTLTKPVTLSRSKINKTKVLKMIFVHLIIFCFCFVPYNINLILYSLVRTQTFVNCSVVAAVRTMYPITLCIAVSNCCFDPIVYYFTSDTIQNSIKMKNWSVRRSDFRFSEVHGAENFIQHNLQTLKSKIFDNESAA.

Residues Met1–Leu19 are Extracellular-facing. Asn5 carries N-linked (GlcNAc...) asparagine glycosylation. Residues Tyr20–Leu46 traverse the membrane as a helical segment. Residues Lys47–Tyr55 are Cytoplasmic-facing. A helical membrane pass occupies residues Met56 to Thr79. At Arg80–Ser92 the chain is on the extracellular side. An intrachain disulfide couples Cys89 to Cys168. The chain crosses the membrane as a helical span at residues Val93 to Val112. The Cytoplasmic segment spans residues Asp113–Ala133. Residues Lys134 to Val154 form a helical membrane-spanning segment. At Gln155–Leu181 the chain is on the extracellular side. Residues Ser182–Lys209 traverse the membrane as a helical segment. Residues Thr210–Val227 are Cytoplasmic-facing. The helical transmembrane segment at Leu228–Ser253 threads the bilayer. The Extracellular segment spans residues Leu254–Met272. Residues Tyr273 to Tyr292 traverse the membrane as a helical segment. Cys284 is lipidated: S-palmitoyl cysteine. Over Phe293–Ala344 the chain is Cytoplasmic.

The protein belongs to the G-protein coupled receptor 1 family. Expressed ubiquitously, including in skin and hair follicle cells. Detected in both Henle's and Huxley's layers of the inner root sheath of the hair follicle and in suprabasal layers of the epidermis (at protein level). Expressed at low levels in peripheral blood leukocytes.

The protein localises to the cell membrane. Functionally, binds to oleoyl-L-alpha-lysophosphatidic acid (LPA). Intracellular cAMP is involved in the receptor activation. Important for the maintenance of hair growth and texture. This chain is Lysophosphatidic acid receptor 6 (LPAR6), found in Homo sapiens (Human).